Here is a 368-residue protein sequence, read N- to C-terminus: HECT-type ubiquitin ligase-interacting protein apyA (368 aa).

Belongs to the arrestin family. As to quaternary structure, interacts with hulA.

May be involved in signaling by recognizing appropriately phosphorylated substrates via its arrestin domains and then recruit a HECT-type ubiquitin ligase such as hulA, leading to ubiquitination of the substrate, providing a link between ubiquitination and phosphorylation in protein regulation and stability. This chain is HECT-type ubiquitin ligase-interacting protein apyA (apyA), found in Emericella nidulans (strain FGSC A4 / ATCC 38163 / CBS 112.46 / NRRL 194 / M139) (Aspergillus nidulans).